A 101-amino-acid chain; its full sequence is Large ribosomal subunit protein uL24 (101 aa).

Belongs to the universal ribosomal protein uL24 family. Part of the 50S ribosomal subunit.

Its function is as follows. One of two assembly initiator proteins, it binds directly to the 5'-end of the 23S rRNA, where it nucleates assembly of the 50S subunit. Functionally, one of the proteins that surrounds the polypeptide exit tunnel on the outside of the subunit. This Streptococcus sanguinis (strain SK36) protein is Large ribosomal subunit protein uL24.